The chain runs to 270 residues: Imidazole glycerol phosphate synthase subunit HisF (270 aa).

Active-site residues include Asp-11 and Asp-130.

Belongs to the HisA/HisF family. Heterodimer of HisH and HisF.

The protein resides in the cytoplasm. It carries out the reaction 5-[(5-phospho-1-deoxy-D-ribulos-1-ylimino)methylamino]-1-(5-phospho-beta-D-ribosyl)imidazole-4-carboxamide + L-glutamine = D-erythro-1-(imidazol-4-yl)glycerol 3-phosphate + 5-amino-1-(5-phospho-beta-D-ribosyl)imidazole-4-carboxamide + L-glutamate + H(+). It functions in the pathway amino-acid biosynthesis; L-histidine biosynthesis; L-histidine from 5-phospho-alpha-D-ribose 1-diphosphate: step 5/9. In terms of biological role, IGPS catalyzes the conversion of PRFAR and glutamine to IGP, AICAR and glutamate. The HisF subunit catalyzes the cyclization activity that produces IGP and AICAR from PRFAR using the ammonia provided by the HisH subunit. This chain is Imidazole glycerol phosphate synthase subunit HisF, found in Sorangium cellulosum (strain So ce56) (Polyangium cellulosum (strain So ce56)).